The sequence spans 344 residues: Fructose-1,6-bisphosphatase, cytosolic (344 aa).

The Mg(2+) site is built by glutamate 71, glutamate 100, aspartate 121, leucine 123, and aspartate 124. Substrate-binding positions include 124-127, asparagine 215, tyrosine 247, tyrosine 267, and lysine 277; that span reads DGSS. A Mg(2+)-binding site is contributed by glutamate 283.

This sequence belongs to the FBPase class 1 family. Mg(2+) serves as cofactor.

Its subcellular location is the cytoplasm. The enzyme catalyses beta-D-fructose 1,6-bisphosphate + H2O = beta-D-fructose 6-phosphate + phosphate. This Oryza coarctata (Wild rice) protein is Fructose-1,6-bisphosphatase, cytosolic.